The sequence spans 202 residues: Oligoribonuclease (202 aa).

The Exonuclease domain occupies 2–166 (LVWIDCEMTG…ADIQESIEEL (165 aa)). Tyr-123 is an active-site residue.

It belongs to the oligoribonuclease family.

The protein localises to the cytoplasm. Its function is as follows. 3'-to-5' exoribonuclease specific for small oligoribonucleotides. The chain is Oligoribonuclease from Cutibacterium acnes (strain DSM 16379 / KPA171202) (Propionibacterium acnes).